A 424-amino-acid polypeptide reads, in one-letter code: Serine--tRNA ligase (424 aa).

Residue 231–233 coordinates L-serine; the sequence is TAE. Position 262-264 (262-264) interacts with ATP; it reads RAE. E285 contributes to the L-serine binding site. Residue 349 to 352 participates in ATP binding; the sequence is EISS. S385 provides a ligand contact to L-serine.

The protein belongs to the class-II aminoacyl-tRNA synthetase family. Type-1 seryl-tRNA synthetase subfamily. Homodimer. The tRNA molecule binds across the dimer.

It localises to the cytoplasm. It catalyses the reaction tRNA(Ser) + L-serine + ATP = L-seryl-tRNA(Ser) + AMP + diphosphate + H(+). The enzyme catalyses tRNA(Sec) + L-serine + ATP = L-seryl-tRNA(Sec) + AMP + diphosphate + H(+). It functions in the pathway aminoacyl-tRNA biosynthesis; selenocysteinyl-tRNA(Sec) biosynthesis; L-seryl-tRNA(Sec) from L-serine and tRNA(Sec): step 1/1. In terms of biological role, catalyzes the attachment of serine to tRNA(Ser). Is also able to aminoacylate tRNA(Sec) with serine, to form the misacylated tRNA L-seryl-tRNA(Sec), which will be further converted into selenocysteinyl-tRNA(Sec). This is Serine--tRNA ligase from Geobacillus thermodenitrificans (strain NG80-2).